The chain runs to 78 residues: Large ribosomal subunit protein bL28 (78 aa).

Belongs to the bacterial ribosomal protein bL28 family.

The polypeptide is Large ribosomal subunit protein bL28 (Haemophilus influenzae (strain 86-028NP)).